The primary structure comprises 119 residues: NADH-quinone oxidoreductase subunit A (119 aa).

The next 3 membrane-spanning stretches (helical) occupy residues 9-29 (VILF…LGFL), 63-83 (LVAI…PWAV), and 88-108 (IGAT…VGFV).

Belongs to the complex I subunit 3 family. As to quaternary structure, NDH-1 is composed of 14 different subunits. Subunits NuoA, H, J, K, L, M, N constitute the membrane sector of the complex.

Its subcellular location is the cell inner membrane. The catalysed reaction is a quinone + NADH + 5 H(+)(in) = a quinol + NAD(+) + 4 H(+)(out). Its function is as follows. NDH-1 shuttles electrons from NADH, via FMN and iron-sulfur (Fe-S) centers, to quinones in the respiratory chain. The immediate electron acceptor for the enzyme in this species is believed to be ubiquinone. Couples the redox reaction to proton translocation (for every two electrons transferred, four hydrogen ions are translocated across the cytoplasmic membrane), and thus conserves the redox energy in a proton gradient. In Leptothrix cholodnii (strain ATCC 51168 / LMG 8142 / SP-6) (Leptothrix discophora (strain SP-6)), this protein is NADH-quinone oxidoreductase subunit A.